Here is a 97-residue protein sequence, read N- to C-terminus: Pyrin domain-containing protein 2 (97 aa).

The 94-residue stretch at 1–94 (MASSAELDFN…SGRADEHCVM (94 aa)) folds into the Pyrin domain.

Interacts with PYCARD/ASC (via pyrin domain). Interacts with NLRP2 (via pyrin domain). Predominantly expressed in peripheral blood. Weakly expressed in testis.

It localises to the cytoplasm. It is found in the nucleus. In terms of biological role, may play a role in innate immunity by disrupting the interaction between PYCARD and NLRP3, thereby regulating the NLRP3 inflammasome. May also inhibit NF-kappa-B signaling distally by affecting the nuclear accumulation of RELA. This chain is Pyrin domain-containing protein 2, found in Homo sapiens (Human).